A 153-amino-acid chain; its full sequence is Small ribosomal subunit protein uS12m (153 aa).

The N-terminal 20 residues, 1–20, are a transit peptide targeting the mitochondrion; that stretch reads MLSRFMSNTWCTPLRQAQRL.

It belongs to the universal ribosomal protein uS12 family. As to quaternary structure, component of the mitochondrial small ribosomal subunit (mt-SSU). Mature yeast 74S mitochondrial ribosomes consist of a small (37S) and a large (54S) subunit. The 37S small subunit contains a 15S ribosomal RNA (15S mt-rRNA) and 34 different proteins. The 54S large subunit contains a 21S rRNA (21S mt-rRNA) and 46 different proteins. uS12m forms part of the decoding center of the mt-SSU.

The protein localises to the mitochondrion. Functionally, component of the mitochondrial ribosome (mitoribosome), a dedicated translation machinery responsible for the synthesis of mitochondrial genome-encoded proteins, including at least some of the essential transmembrane subunits of the mitochondrial respiratory chain. The mitoribosomes are attached to the mitochondrial inner membrane and translation products are cotranslationally integrated into the membrane. uS12m is required for respiratory growth. The chain is Small ribosomal subunit protein uS12m (MRPS12) from Saccharomyces cerevisiae (strain ATCC 204508 / S288c) (Baker's yeast).